The following is a 33-amino-acid chain: Photosystem II reaction center protein Psb30 (33 aa).

The helical transmembrane segment at 5-25 (LIVQLGSLTLITLAGPLVVVL) threads the bilayer.

The protein belongs to the Psb30/Ycf12 family. As to quaternary structure, PSII is composed of 1 copy each of membrane proteins PsbA, PsbB, PsbC, PsbD, PsbE, PsbF, PsbH, PsbI, PsbJ, PsbK, PsbL, PsbM, PsbT, PsbY, PsbZ, Psb30/Ycf12, peripheral proteins of the oxygen-evolving complex and a large number of cofactors. It forms dimeric complexes.

The protein localises to the plastid. The protein resides in the chloroplast thylakoid membrane. Functionally, a core subunit of photosystem II (PSII), probably helps stabilize the reaction center. The protein is Photosystem II reaction center protein Psb30 of Euglena deses.